The following is a 73-amino-acid chain: AVFDQSCKGVYDRSLFSKLDRVCDDCYNLYRKHYVATGCRRNCYGNLVFRQCLDDLMLVDVVDEYYVASVQMV.

3 disulfides stabilise this stretch: Cys-7–Cys-43, Cys-23–Cys-39, and Cys-26–Cys-52. A Valine amide modification is found at Val-73.

Belongs to the arthropod CHH/MIH/GIH/VIH hormone family. Produced by the medulla terminalis X-organ in the eyestalks and transported to the sinus gland where they are stored and released.

Its subcellular location is the secreted. Its function is as follows. Hormone found in the sinus gland of isopods and decapods which controls the blood sugar level. Has a secretagogue action over the amylase released from the midgut gland. May act as a stress hormone and may be involved in the control of molting and reproduction. This Jasus lalandii (Cape rock lobster) protein is Crustacean hyperglycemic hormone.